The following is a 449-amino-acid chain: Histidinol dehydrogenase (449 aa).

NAD(+) contacts are provided by Tyr-136, Gln-204, and Asn-232. Residues Thr-255, Gln-277, and His-280 each contribute to the substrate site. Positions 277 and 280 each coordinate Zn(2+). Catalysis depends on proton acceptor residues Glu-346 and His-347. Positions 347, 380, 434, and 439 each coordinate substrate. A Zn(2+)-binding site is contributed by Asp-380. His-439 contacts Zn(2+).

Belongs to the histidinol dehydrogenase family. The cofactor is Zn(2+).

It catalyses the reaction L-histidinol + 2 NAD(+) + H2O = L-histidine + 2 NADH + 3 H(+). Its pathway is amino-acid biosynthesis; L-histidine biosynthesis; L-histidine from 5-phospho-alpha-D-ribose 1-diphosphate: step 9/9. In terms of biological role, catalyzes the sequential NAD-dependent oxidations of L-histidinol to L-histidinaldehyde and then to L-histidine. This chain is Histidinol dehydrogenase (hisD), found in Mycobacterium leprae (strain TN).